Consider the following 610-residue polypeptide: Protein SAN1 (610 aa).

Residues 1 to 10 (MSESGQEQNR) are compositionally biased toward polar residues. Disordered regions lie at residues 1–36 (MSESGQEQNRGTNTSPNNAENNNNSNAASGPLNGGA) and 176–231 (VDST…PSIP). The segment covering 11 to 36 (GTNTSPNNAENNNNSNAASGPLNGGA) has biased composition (low complexity). The span at 194 to 203 (EGTKKRKDNE) shows a compositional bias: basic and acidic residues. Residues 210–223 (TADNDSNPSITNAT) are compositionally biased toward polar residues. An RING-type zinc finger spans residues 240–280 (NDEETNPSYKHSPIKLPCGHIFGRECIYKWSRLENSCPLCR). Disordered regions lie at residues 318 to 348 (TAVNSTNENSSAPSENTSNTTVPTIGNASSG), 360 to 453 (VPQN…TDPH), 471 to 502 (GTSDTSATTAPGAQTVHNQGRNDSSSSDTTQG), 514 to 554 (GHFT…GVAS), and 569 to 610 (NNNS…RSSQ). The span at 319 to 348 (AVNSTNENSSAPSENTSNTTVPTIGNASSG) shows a compositional bias: polar residues. Low complexity-rich tracts occupy residues 384–406 (NGPSSTTQNPPSNSGGSNNNQSP) and 425–447 (PSASDSSASPSAANGPNSNNTSS). The span at 471–492 (GTSDTSATTAPGAQTVHNQGRN) shows a compositional bias: polar residues. A compositionally biased stretch (low complexity) spans 493-502 (DSSSSDTTQG). Composition is skewed to polar residues over residues 533 to 554 (QQRGGSTGENNRNNLFSSGVAS) and 592 to 610 (DTTIHNDVPNDNNEQRSSQ).

In terms of biological role, plays a specific role in mating-type regulation of yeast, by acting post-translationally to control the stability or activity of the SIR4 proteins. This Saccharomyces cerevisiae (strain ATCC 204508 / S288c) (Baker's yeast) protein is Protein SAN1 (SAN1).